Here is a 344-residue protein sequence, read N- to C-terminus: MIGVTRRSGLALAVLVSSAACAGAEPVAPPPAPAPTAPSAVAVERFTPVERRPVADATTTAREVVVAGRTRAYRLHASPGAPALPEGRPLALVLHGKGGSAEEMERHSGLNAAADAAGVALAYLEGVAEGWSASPEPTDLRPDPDADVDFARAVVDELTGAARVDPDHVYAIGFSEGGMMALRLAAEHPDWFAGVASVAGQLPSPPAEVRPTGPIPVLSIYGDADPLRPFDGLSTAPADTPAIGKEPPKPTISTAETVEAFCRAGGADERRREEARPAAAPGGTSTSRETCANPDSGLRVVSITVHGGGHTWPGGTFPYRPAVVGATDRQLSTADTAVDFLLGG.

The segment at residues 1–34 (MIGVTRRSGLALAVLVSSAACAGAEPVAPPPAPA) is a signal peptide (tat-type signal). The tract at residues 265–295 (GGADERRREEARPAAAPGGTSTSRETCANPD) is disordered. Residues 266–276 (GADERRREEAR) show a composition bias toward basic and acidic residues.

This sequence belongs to the AB hydrolase superfamily. Predicted to be exported by the Tat system. The position of the signal peptide cleavage has not been experimentally proven.

In Nocardia uniformis subsp. tsuyamanensis, this protein is Putative esterase NocK.